A 330-amino-acid chain; its full sequence is Serine/threonine-protein phosphatase beta isoform (330 aa).

The Mn(2+) site is built by Asp-63, His-65, Asp-91, and Asn-123. His-124 serves as the catalytic Proton donor. Residues His-172 and His-247 each coordinate Mn(2+). Polar residues predominate over residues 308–319; that stretch reads GMNSSRPTTPQR. Residues 308–330 form a disordered region; it reads GMNSSRPTTPQRSAPMLATNKKK. Phosphothreonine occurs at positions 315 and 316.

Belongs to the PPP phosphatase family. PP-1 subfamily. As to quaternary structure, interacts with Nop17l. Interacts with uri; uri inhibits flw phosphatase activity. Requires Mn(2+) as cofactor.

It carries out the reaction O-phospho-L-seryl-[protein] + H2O = L-seryl-[protein] + phosphate. The enzyme catalyses O-phospho-L-threonyl-[protein] + H2O = L-threonyl-[protein] + phosphate. Functionally, required for cell adhesion in non-muscle tissues and in maintenance of muscle attachment. Vital for larval development. The polypeptide is Serine/threonine-protein phosphatase beta isoform (flw) (Drosophila melanogaster (Fruit fly)).